The primary structure comprises 34 residues: NU-buthitoxin-Ptr1a (34 aa).

3 disulfide bridges follow: C6/C27, C12/C32, and C16/C34.

Expressed by the venom gland.

It localises to the secreted. Its function is as follows. Toxin that acts as an agonist on melanocortin receptors (MC1R, MC3R, MC5R, MC5R). After binding to MC1R, the peptide activates the hMC1R/Gs pathway, but after binding to MC4R, it is not able to activate or antagonize the MC4R/Gs pathway. Inhibits melanocyte stimulating hormone (MSH)-binding to human receptors (Ki=2.9 uM to MC1R, Ki=3.9 uM to MC3R, Ki=2.6 uM to MC4R, Ki=2.2 uM to MC5R). This toxin is structurally unrelated to the natural agonists. The sequence is that of NU-buthitoxin-Ptr1a from Parabuthus transvaalicus (Transvaal thick-tailed scorpion).